We begin with the raw amino-acid sequence, 455 residues long: Glutamyl-tRNA reductase (455 aa).

Residues Thr-49–Arg-52, Ser-109, Glu-114–Gln-116, and Gln-120 each bind substrate. Cys-50 acts as the Nucleophile in catalysis. Position 190-195 (Gly-190–Gly-195) interacts with NADP(+).

This sequence belongs to the glutamyl-tRNA reductase family. In terms of assembly, homodimer.

It catalyses the reaction (S)-4-amino-5-oxopentanoate + tRNA(Glu) + NADP(+) = L-glutamyl-tRNA(Glu) + NADPH + H(+). It functions in the pathway porphyrin-containing compound metabolism; protoporphyrin-IX biosynthesis; 5-aminolevulinate from L-glutamyl-tRNA(Glu): step 1/2. Catalyzes the NADPH-dependent reduction of glutamyl-tRNA(Glu) to glutamate 1-semialdehyde (GSA). The sequence is that of Glutamyl-tRNA reductase from Salinispora tropica (strain ATCC BAA-916 / DSM 44818 / JCM 13857 / NBRC 105044 / CNB-440).